Consider the following 186-residue polypeptide: Elongation factor P (186 aa).

It belongs to the elongation factor P family.

Its subcellular location is the cytoplasm. It functions in the pathway protein biosynthesis; polypeptide chain elongation. In terms of biological role, involved in peptide bond synthesis. Stimulates efficient translation and peptide-bond synthesis on native or reconstituted 70S ribosomes in vitro. Probably functions indirectly by altering the affinity of the ribosome for aminoacyl-tRNA, thus increasing their reactivity as acceptors for peptidyl transferase. This chain is Elongation factor P, found in Brucella ovis (strain ATCC 25840 / 63/290 / NCTC 10512).